We begin with the raw amino-acid sequence, 221 residues long: Transcriptional regulatory protein QseB (221 aa).

The 115-residue stretch at 2–116 folds into the Response regulatory domain; the sequence is RILLIEDDNL…EVAARLQALI (115 aa). Residue Asp-51 is modified to 4-aspartylphosphate. Residues 124–218 constitute a DNA-binding region (ompR/PhoB-type); sequence HSVIEQAGVK…VHGVGYALGQ (95 aa).

In terms of processing, phosphorylated by QseC.

The protein localises to the cytoplasm. Member of a two-component regulatory system QseB/QseC. This chain is Transcriptional regulatory protein QseB (qseB), found in Haemophilus influenzae (strain ATCC 51907 / DSM 11121 / KW20 / Rd).